The primary structure comprises 172 residues: Adrenodoxin homolog, mitochondrial (172 aa).

The N-terminal 16 residues, 1–16 (MLKIVTRAGHTARISN), are a transit peptide targeting the mitochondrion. Positions 61–163 (LKITFILKDG…GIRVALPQMT (103 aa)) constitute a 2Fe-2S ferredoxin-type domain. [2Fe-2S] cluster-binding residues include C98, C104, C107, and C144.

The protein belongs to the adrenodoxin/putidaredoxin family. In terms of assembly, interacts in its reduced state with the apo form of ISU1. [2Fe-2S] cluster is required as a cofactor.

Its subcellular location is the mitochondrion matrix. Functionally, iron-sulfur protein that transfers electrons in a wide variety of metabolic reactions. Involved in heme A biosynthesis and in iron-sulfur cluster assembly. Transfers electrons from adrenodoxin reductase ARH1 to heme A synthase COX15, a heme protein that catalyzes the conversion of heme O to heme A. Required for the de novo synthesis of Fe-S clusters on iron sulfur cluster assembly protein ISU1. Interact in its reduced state with ISU1 to productively deliver electrons for Fe-S cluster synthesis. Essential for coenzyme Q biosynthesis. May transfer the electrons required for the hydroxylation reaction performed by COQ6. The sequence is that of Adrenodoxin homolog, mitochondrial from Saccharomyces cerevisiae (strain ATCC 204508 / S288c) (Baker's yeast).